A 410-amino-acid polypeptide reads, in one-letter code: Probable intron-encoded endonuclease bI1 (410 aa).

The segment at 1–131 is COB exon 1 encoded; that stretch reads MRLLKTHPIL…VLMMAIAFLG (131 aa). Transmembrane regions (helical) follow at residues 32 to 52, 75 to 95, and 112 to 132; these read FGSL…FLAM, GWLI…FVYL, and LLWS…FLGF. Residues 132–410 form a COB intron 1 encoded region; that stretch reads FNGQKYMCFY…KKNYIVKVIK (279 aa). The region spanning 196-286 is the GIY-YIG domain; it reads PFSGIYMIVN…LETLKPEYNI (91 aa).

The protein to endonucleases of group I introns of fungi and phage. The mature protein may arise from proteolytic cleavage of an in-frame translation of COB exon 1 plus intron 1, containing the bI1 open reading frame.

It is found in the mitochondrion. Its subcellular location is the membrane. Its function is as follows. Mitochondrial DNA endonuclease involved in intron homing. The protein is Probable intron-encoded endonuclease bI1 (bI1) of Mycosarcoma maydis (Corn smut fungus).